The sequence spans 1496 residues: DNA-directed RNA polymerase subunit beta' (1496 aa).

Zn(2+) contacts are provided by C67, C69, C82, and C85. Residues D499, D501, and D503 each coordinate Mg(2+). Zn(2+) is bound by residues C867, C943, C950, and C953.

The protein belongs to the RNA polymerase beta' chain family. As to quaternary structure, the RNAP catalytic core consists of 2 alpha, 1 beta, 1 beta' and 1 omega subunit. When a sigma factor is associated with the core the holoenzyme is formed, which can initiate transcription. Mg(2+) serves as cofactor. Requires Zn(2+) as cofactor.

It carries out the reaction RNA(n) + a ribonucleoside 5'-triphosphate = RNA(n+1) + diphosphate. DNA-dependent RNA polymerase catalyzes the transcription of DNA into RNA using the four ribonucleoside triphosphates as substrates. In Chlorobium limicola (strain DSM 245 / NBRC 103803 / 6330), this protein is DNA-directed RNA polymerase subunit beta'.